The following is a 222-amino-acid chain: Cytochrome b6 (222 aa).

A helical membrane pass occupies residues 39–59 (IFYCLGGITLTCFLIQFATGF). Residue Cys42 participates in heme c binding. The heme b site is built by His93 and His107. Helical transmembrane passes span 97–117 (ASMM…TGGF), 123–143 (LTWV…VTGY), and 193–213 (LHTF…FLMI). 2 residues coordinate heme b: His194 and His209.

It belongs to the cytochrome b family. PetB subfamily. As to quaternary structure, the 4 large subunits of the cytochrome b6-f complex are cytochrome b6, subunit IV (17 kDa polypeptide, PetD), cytochrome f and the Rieske protein, while the 4 small subunits are PetG, PetL, PetM and PetN. The complex functions as a dimer. Heme b is required as a cofactor. Heme c serves as cofactor.

Its subcellular location is the cellular thylakoid membrane. Functionally, component of the cytochrome b6-f complex, which mediates electron transfer between photosystem II (PSII) and photosystem I (PSI), cyclic electron flow around PSI, and state transitions. The polypeptide is Cytochrome b6 (Cyanothece sp. (strain PCC 7425 / ATCC 29141)).